A 1099-amino-acid polypeptide reads, in one-letter code: 1-phosphatidylinositol 4,5-bisphosphate phosphodiesterase 1 (1099 aa).

Over residues 1–10 (MLESLNRRNS) the composition is skewed to basic and acidic residues. 2 disordered regions span residues 1-109 (MLES…SSTT) and 128-164 (ESRS…KSIQ). 2 stretches are compositionally biased toward low complexity: residues 43-66 (PPKS…KSDL) and 86-109 (PKQQ…SSTT). A compositionally biased stretch (polar residues) spans 131–141 (SIVSNNGGSPM). Low complexity predominate over residues 142-155 (SDSTTVTSTLSTDT). The region spanning 566-726 (YDYPLNEYFI…LKHKFIIKVK (161 aa)) is the PI-PLC X-box domain. Residues H579 and H642 contribute to the active site. The substrate site is built by K724 and K726. The segment at 742–780 (FTTSTTTTTTTTTTTTTATSLSEDNENNKSNSSSTSSFI) is disordered. A compositionally biased stretch (low complexity) spans 743–778 (TTSTTTTTTTTTTTTTATSLSEDNENNKSNSSSTSS). The PI-PLC Y-box domain maps to 794-912 (ELSNLGIYTQ…GYVLKPSVLR (119 aa)). The substrate site is built by S823 and R852. Residues 917–1071 (KSSSSNVDTR…QGYRYIYLND (155 aa)) form the C2 domain.

It carries out the reaction a 1,2-diacyl-sn-glycero-3-phospho-(1D-myo-inositol-4,5-bisphosphate) + H2O = 1D-myo-inositol 1,4,5-trisphosphate + a 1,2-diacyl-sn-glycerol + H(+). In terms of biological role, the production of the second messenger molecules diacylglycerol (DAG) and inositol 1,4,5-trisphosphate (IP3) is mediated by activated phosphatidylinositol-specific phospholipase C enzymes. In Candida albicans (Yeast), this protein is 1-phosphatidylinositol 4,5-bisphosphate phosphodiesterase 1 (PLC1).